Reading from the N-terminus, the 375-residue chain is Ribonuclease D (375 aa).

The 3'-5' exonuclease domain maps to 3–169 (YQMITTDDAL…LPITAKLMVE (167 aa)). An HRDC domain is found at 210–289 (RTRQLACLQL…EKAQTLPEDA (80 aa)).

It belongs to the RNase D family. It depends on a divalent metal cation as a cofactor.

It is found in the cytoplasm. The catalysed reaction is Exonucleolytic cleavage that removes extra residues from the 3'-terminus of tRNA to produce 5'-mononucleotides.. In terms of biological role, exonuclease involved in the 3' processing of various precursor tRNAs. Initiates hydrolysis at the 3'-terminus of an RNA molecule and releases 5'-mononucleotides. The chain is Ribonuclease D from Escherichia coli (strain K12).